Consider the following 712-residue polypeptide: Zinc finger and BTB domain-containing protein 39 (712 aa).

The BTB domain occupies 30–96 (CDVTIVVGSR…VYTSELFTDL (67 aa)). Disordered regions lie at residues 129–162 (ARAK…LRGG), 176–224 (SDAG…IPSM), and 236–260 (GIQT…KNSF). A compositionally biased stretch (polar residues) spans 134–147 (LTSTSESHSGTLSC). A Glycyl lysine isopeptide (Lys-Gly) (interchain with G-Cter in SUMO2) cross-link involves residue lysine 183. A C2H2-type 1 zinc finger spans residues 372-394 (GNCKVCETHFQDRNSRVTHVLSH). A C2H2-type 2; atypical zinc finger spans residues 400-422 (FSCDMCETKFFTQWQLTLHRRDG). A Glycyl lysine isopeptide (Lys-Gly) (interchain with G-Cter in SUMO2) cross-link involves residue lysine 439. Residues 480–502 (QACSVCDQRHLNLCSLMWHTLSH) form a C2H2-type 3; atypical zinc finger. 4 consecutive C2H2-type zinc fingers follow at residues 508–530 (FSCS…MAVH), 538–560 (FHCR…VSQH), 605–627 (YSCK…RRIH), and 633–655 (YQCK…LKTH). The C2H2-type 8; atypical zinc finger occupies 661 to 683 (YRCTVCGHYSSTLNLMSKHVGVH).

The protein belongs to the krueppel C2H2-type zinc-finger protein family.

The protein localises to the nucleus. May be involved in transcriptional regulation. This Homo sapiens (Human) protein is Zinc finger and BTB domain-containing protein 39 (ZBTB39).